A 331-amino-acid chain; its full sequence is UPF0324 membrane protein SERP0111 (331 aa).

The next 10 helical transmembrane spans lie at 7-26, 31-48, 69-88, 93-115, 122-144, 154-176, 183-205, 249-271, 275-297, and 308-330; these read ASFMKGIMFTFTIAIISYIL, ILHTIGALAIAIIFAMIY, LLKFAIILYGLKLNMGDILG, LLLIDIIVIIFSISLTLLLNQII, SILLGIGTGVCGAAAIAATAPIL, SVGIIALVGTIFALIYTAIEAIF, YGAWTGISLHEIAQVVLAAGIGG, IPYFLIGFIIMACINTFVPIPSL, IINVITTLCMLMAMVALGLNIVL, and FIVICITSICLSGVTLLVTSIMF.

Belongs to the UPF0324 family.

The protein resides in the cell membrane. The protein is UPF0324 membrane protein SERP0111 of Staphylococcus epidermidis (strain ATCC 35984 / DSM 28319 / BCRC 17069 / CCUG 31568 / BM 3577 / RP62A).